The following is a 318-amino-acid chain: Replication factor C small subunit (318 aa).

An ATP-binding site is contributed by 43 to 50; sequence GSVGTGKT.

This sequence belongs to the activator 1 small subunits family. RfcS subfamily. In terms of assembly, heteromultimer composed of small subunits (RfcS) and large subunits (RfcL).

Part of the RFC clamp loader complex which loads the PCNA sliding clamp onto DNA. This Thermoplasma volcanium (strain ATCC 51530 / DSM 4299 / JCM 9571 / NBRC 15438 / GSS1) protein is Replication factor C small subunit.